The following is a 48-amino-acid chain: MGKFPEAEERLLNVKICMRCNARNAVRATTCRKCGYQNLRPKNKERKA.

It belongs to the eukaryotic ribosomal protein eL40 family.

The chain is Large ribosomal subunit protein eL40 from Methanosphaerula palustris (strain ATCC BAA-1556 / DSM 19958 / E1-9c).